Reading from the N-terminus, the 2506-residue chain is Highly reducing polyketide synthase rstn3 (2506 aa).

Positions 8–436 constitute a Ketosynthase family 3 (KS3) domain; sequence VEPIAIVGMA…GANAHAILDA (429 aa). Catalysis depends on for beta-ketoacyl synthase activity residues C183, H318, and H358. The 329-residue stretch at 547–875 folds into the Malonyl-CoA:ACP transacylase (MAT) domain; sequence FIFTGQGAQW…KMVGSLFLSG (329 aa). The interval 941–1050 is N-terminal hotdog fold; the sequence is HDLLGSRLPG…ASDQSISSVE (110 aa). One can recognise a PKS/mFAS DH domain in the interval 941–1212; sequence HDLLGSRLPG…FSSLETAVGE (272 aa). The Proton acceptor; for dehydratase activity role is filled by H973. The segment at 1060–1212 is C-terminal hotdog fold; that stretch reads NKDSYDRRWY…FSSLETAVGE (153 aa). The active-site Proton donor; for dehydratase activity is D1125. The tract at residues 1263-1563 is methyltransferase (CMet) domain; the sequence is VTRLAIRSSA…SGADIVLDDY (301 aa). One can recognise an Enoyl reductase (ER) domain in the interval 1827–2093; sequence GRVDSFYFKE…QDDYVGRVVL (267 aa). The Ketoreductase (KR) domain occupies 2116–2296; that stretch reads ASYLLIGCLG…QATSIALGMI (181 aa). Residues 2423 to 2501 enclose the Carrier domain; that stretch reads AVKVTTLGLI…DLAEKVVALA (79 aa). Position 2460 is an O-(pantetheine 4'-phosphoryl)serine (S2460).

Pantetheine 4'-phosphate serves as cofactor.

The protein operates within antifungal biosynthesis. Functionally, highly reducing polyketide synthase; part of the gene cluster that mediates the biosynthesis of the tetrahydropyranyl antifungal agent restricticin that acts as an inhibitor of CYP51 and blocks the ergosterol biosynthesis. The highly reducing polyketide synthase rstn3, the short chain dehydrogenase rstn4, the cyclase rstn5, the FAD-dependent monooxygenase rstn6 and the enoylreductase rstn7 are required to generate the first stable intermediate desmethylrestrictinol. Rstn3 with rstn7 biosynthesize the first polyketide chain intermediate that is reduced by rstn4, followed by epoxidation by rstn6 before 6-endo cyclization via epoxide opening by rstn5 leads to desmethylrestrictinol. The methyltransferase rstn1 then catalyzes the C4 O-methylation of desmethylrestrictinol to produce restrictinol, and the nonribosomal peptide synthetase rstn8 catalyzes the C3 esterification of restrictinol with glycine that leads to restricticin. In Aspergillus nomiae NRRL (strain ATCC 15546 / NRRL 13137 / CBS 260.88 / M93), this protein is Highly reducing polyketide synthase rstn3.